A 360-amino-acid chain; its full sequence is Phosphoserine aminotransferase (360 aa).

Arg-42 lines the L-glutamate pocket. Residues Trp-102, Thr-152, Asp-171, and Gln-194 each contribute to the pyridoxal 5'-phosphate site. N6-(pyridoxal phosphate)lysine is present on Lys-195. Residue 237 to 238 (NT) participates in pyridoxal 5'-phosphate binding.

This sequence belongs to the class-V pyridoxal-phosphate-dependent aminotransferase family. SerC subfamily. Homodimer. Requires pyridoxal 5'-phosphate as cofactor.

The protein localises to the cytoplasm. The enzyme catalyses O-phospho-L-serine + 2-oxoglutarate = 3-phosphooxypyruvate + L-glutamate. The catalysed reaction is 4-(phosphooxy)-L-threonine + 2-oxoglutarate = (R)-3-hydroxy-2-oxo-4-phosphooxybutanoate + L-glutamate. Its pathway is amino-acid biosynthesis; L-serine biosynthesis; L-serine from 3-phospho-D-glycerate: step 2/3. The protein operates within cofactor biosynthesis; pyridoxine 5'-phosphate biosynthesis; pyridoxine 5'-phosphate from D-erythrose 4-phosphate: step 3/5. Its function is as follows. Catalyzes the reversible conversion of 3-phosphohydroxypyruvate to phosphoserine and of 3-hydroxy-2-oxo-4-phosphonooxybutanoate to phosphohydroxythreonine. The polypeptide is Phosphoserine aminotransferase (Coxiella burnetii (strain Dugway 5J108-111)).